Consider the following 142-residue polypeptide: Hemoglobin subunit zeta (142 aa).

S2 is modified (N-acetylserine). A Globin domain is found at S2–R142. Position 53 is a phosphoserine (S53). H59 lines the heme b pocket. S73 is subject to Phosphoserine. H88 contributes to the heme b binding site.

Belongs to the globin family. Heterotetramer of two zeta chains and beta-type chains.

The zeta chain is an alpha-type chain of mammalian embryonic hemoglobin. This is Hemoglobin subunit zeta (HBZ1) from Equus caballus (Horse).